The primary structure comprises 249 residues: Phosphonates import ATP-binding protein PhnC (249 aa).

An ABC transporter domain is found at 2–246; sequence IEFKKVEKVW…KLNESKLEEI (245 aa). Residue 35–42 participates in ATP binding; it reads GLSGAGKT.

The protein belongs to the ABC transporter superfamily. Phosphonates importer (TC 3.A.1.9.1) family. In terms of assembly, the complex is composed of two ATP-binding proteins (PhnC), two transmembrane proteins (PhnE) and a solute-binding protein (PhnD).

It is found in the cell membrane. The enzyme catalyses phosphonate(out) + ATP + H2O = phosphonate(in) + ADP + phosphate + H(+). Part of the ABC transporter complex PhnCDE involved in phosphonates import. Responsible for energy coupling to the transport system. The polypeptide is Phosphonates import ATP-binding protein PhnC (Mesoplasma florum (strain ATCC 33453 / NBRC 100688 / NCTC 11704 / L1) (Acholeplasma florum)).